We begin with the raw amino-acid sequence, 271 residues long: MSKRLLLFDFDETYFKHNTNEEDLSHLREMEKLLEKLTNNNEVITAVLTGSTFQSVMDKMDQVNMTFKPLHIFSDLSSKMFTWNNGEYVESETYKKKVLSEPFLFEDIEDILRHISAQYNVEFIPQRAFEGNETHYNFYFHSTGNHNNDSRILEALVRYANDQNYTARFSRSNPLAGDPENAYDIDFTPSNAGKLYATQFLMKKYNIPVKSILGFGDSGNDEAYLSYLEHAYLMSNSRDEALKQKFRLTKYPYYQGITLHVKEFVEGKYDY.

This sequence belongs to the HAD-like hydrolase superfamily.

This is an uncharacterized protein from Staphylococcus aureus (strain Mu50 / ATCC 700699).